The sequence spans 298 residues: NADH-cytochrome b5 reductase 1 (298 aa).

A helical transmembrane segment spans residues Val-14–Val-34. The FAD-binding FR-type domain maps to Lys-56–Thr-159. Residues Ser-139–Gly-154 and Ala-165–Phe-197 contribute to the FAD site.

This sequence belongs to the flavoprotein pyridine nucleotide cytochrome reductase family. As to quaternary structure, monomer. Component of the 2-(3-amino-3-carboxypropyl)histidine synthase complex composed of DPH1, DPH2, DPH3 and a NADH-dependent reductase, predominantly CBR1. FAD is required as a cofactor.

The protein resides in the mitochondrion outer membrane. It catalyses the reaction 2 Fe(III)-[cytochrome b5] + NADH = 2 Fe(II)-[cytochrome b5] + NAD(+) + H(+). The catalysed reaction is 2 Fe(3+)-[Dph3] + NADH = 2 Fe(2+)-[Dph3] + NAD(+) + H(+). Its pathway is protein modification; peptidyl-diphthamide biosynthesis. Functionally, NADH-dependent reductase for DPH3 and cytochrome b5. Required for the first step of diphthamide biosynthesis, a post-translational modification of histidine which occurs in elongation factor 2. DPH1 and DPH2 transfer a 3-amino-3-carboxypropyl (ACP) group from S-adenosyl-L-methionine (SAM) to a histidine residue, the reaction is assisted by a reduction system comprising DPH3 and a NADH-dependent reductase, predominantly CBR1. By reducing DPH3, also involved in the formation of the tRNA wobble base modification mcm5s 2U (5-methoxycarbonylmethyl-2-thiouridine), mediated by the elongator complex. The cytochrome b5/NADH cytochrome b5 reductase electron transfer system supports the catalytic activity of several sterol biosynthetic enzymes. The sequence is that of NADH-cytochrome b5 reductase 1 (CBR1) from Mortierella alpina (Oleaginous fungus).